The primary structure comprises 201 residues: Protein FAR-RED-ELONGATED HYPOCOTYL 1-LIKE (201 aa).

The Nuclear localization sequence (NLS) motif lies at K32 to K35. The Nuclear export sequence (NES) motif lies at L43–L46.

This sequence belongs to the FHY1 protein family. As to quaternary structure, homodimer and heterodimer with FHY1. Interacts with PHYA, especially upon far-red (FR) light illumination. Binds to LAF1 and HFR1. Post-translationally, inactivated by rapid reversible PHYA-mediated phosphorylation.

The protein localises to the nucleus. Its subcellular location is the cytoplasm. Functionally, can activate transcription. Essential for light-regulated PHYA nuclear accumulation and subsequent PHYA phototropic signaling processes. PHYA-specific signal transducer in response to continuous FR lights. Mediates the association of PHYA with HFR1 and LAF1 in the nucleus in response to FR conditions. Contributes to inhibition of hypocotyl elongation in continuous blue light (B). This Arabidopsis thaliana (Mouse-ear cress) protein is Protein FAR-RED-ELONGATED HYPOCOTYL 1-LIKE.